A 226-amino-acid chain; its full sequence is 2-C-methyl-D-erythritol 4-phosphate cytidylyltransferase (226 aa).

This sequence belongs to the IspD/TarI cytidylyltransferase family. IspD subfamily.

It catalyses the reaction 2-C-methyl-D-erythritol 4-phosphate + CTP + H(+) = 4-CDP-2-C-methyl-D-erythritol + diphosphate. It participates in isoprenoid biosynthesis; isopentenyl diphosphate biosynthesis via DXP pathway; isopentenyl diphosphate from 1-deoxy-D-xylulose 5-phosphate: step 2/6. In terms of biological role, catalyzes the formation of 4-diphosphocytidyl-2-C-methyl-D-erythritol from CTP and 2-C-methyl-D-erythritol 4-phosphate (MEP). This chain is 2-C-methyl-D-erythritol 4-phosphate cytidylyltransferase, found in Clostridium beijerinckii (strain ATCC 51743 / NCIMB 8052) (Clostridium acetobutylicum).